A 243-amino-acid polypeptide reads, in one-letter code: Probable septum site-determining protein MinC (243 aa).

The protein belongs to the MinC family. As to quaternary structure, interacts with MinD and FtsZ.

Cell division inhibitor that blocks the formation of polar Z ring septums. Rapidly oscillates between the poles of the cell to destabilize FtsZ filaments that have formed before they mature into polar Z rings. Prevents FtsZ polymerization. The polypeptide is Probable septum site-determining protein MinC (Wigglesworthia glossinidia brevipalpis).